A 125-amino-acid polypeptide reads, in one-letter code: Small ribosomal subunit protein uS13 (125 aa).

The tract at residues 92 to 125 is disordered; the sequence is RRSLPVRGQRTQTNARTRKGKRKTVAGKKKATKK. Basic residues predominate over residues 107–125; it reads RTRKGKRKTVAGKKKATKK.

Belongs to the universal ribosomal protein uS13 family. As to quaternary structure, part of the 30S ribosomal subunit. Forms a loose heterodimer with protein S19. Forms two bridges to the 50S subunit in the 70S ribosome.

Its function is as follows. Located at the top of the head of the 30S subunit, it contacts several helices of the 16S rRNA. In the 70S ribosome it contacts the 23S rRNA (bridge B1a) and protein L5 of the 50S subunit (bridge B1b), connecting the 2 subunits; these bridges are implicated in subunit movement. Contacts the tRNAs in the A and P-sites. The polypeptide is Small ribosomal subunit protein uS13 (Chlorobium phaeobacteroides (strain DSM 266 / SMG 266 / 2430)).